The chain runs to 258 residues: Tryptophan synthase alpha chain (258 aa).

Catalysis depends on proton acceptor residues E52 and D63.

The protein belongs to the TrpA family. As to quaternary structure, tetramer of two alpha and two beta chains.

It carries out the reaction (1S,2R)-1-C-(indol-3-yl)glycerol 3-phosphate + L-serine = D-glyceraldehyde 3-phosphate + L-tryptophan + H2O. It participates in amino-acid biosynthesis; L-tryptophan biosynthesis; L-tryptophan from chorismate: step 5/5. In terms of biological role, the alpha subunit is responsible for the aldol cleavage of indoleglycerol phosphate to indole and glyceraldehyde 3-phosphate. In Streptococcus pneumoniae serotype 4 (strain ATCC BAA-334 / TIGR4), this protein is Tryptophan synthase alpha chain.